We begin with the raw amino-acid sequence, 693 residues long: Periplasmic alpha-galactoside-binding protein (693 aa).

An N-terminal signal peptide occupies residues 1–20 (MKTHRLNMTASLLIGISAFA).

Belongs to the bacterial solute-binding protein 5 family.

It is found in the periplasm. Involved in the transport of alpha-galactosides. Required for the utilization of raffinose and melibiose. Probably acts as a periplasmic substrate-binding protein for a transport system. The protein is Periplasmic alpha-galactoside-binding protein of Rhizobium meliloti (strain 1021) (Ensifer meliloti).